The sequence spans 942 residues: Endoprotease bli-4 (942 aa).

The first 22 residues, 1-22 (MRISIGRIAWQILAVLIAVAFT), serve as a signal peptide directing secretion. A propeptide spanning residues 23-116 (IEHDSICDES…EQRPKKRVKR (94 aa)) is cleaved from the precursor. Residues 117–871 (DYILLDNDVH…TLLIDSNKSS (755 aa)) are Lumenal-facing. Aspartate 124 contacts Ca(2+). The tract at residues 130–160 (PFRRSVLNRDGTRRAQRQQPQSPREIPSLPF) is disordered. The Peptidase S8 domain maps to 168-483 (QWYLHGGAVG…YGLIDGGALV (316 aa)). Asparagine 195 carries N-linked (GlcNAc...) asparagine glycosylation. The active-site Charge relay system is the aspartate 202. Aspartate 203 is a binding site for substrate. Positions 211, 223, 228, and 230 each coordinate Ca(2+). The disordered stretch occupies residues 211-242 (DLAANYDPLASTDINDHDDDPTPQNNGDNKHG). 238–239 (DN) provides a ligand contact to substrate. Histidine 241 (charge relay system) is an active-site residue. Residues leucine 252, asparagine 255, glutamine 257, and glycine 259 each contribute to the Ca(2+) site. 2 disulfides stabilise this stretch: cysteine 258–cysteine 407 and cysteine 350–cysteine 380. Substrate is bound by residues glutamate 283, 300–305 (SWGPED), aspartate 311, and 339–342 (ASGN). Aspartate 305 contacts Ca(2+). Aspartate 348 is a Ca(2+) binding site. Positions 353 and 355 each coordinate substrate. Position 378 (glutamate 378) interacts with Ca(2+). The active-site Charge relay system is serine 415. Serine 415 contributes to the substrate binding site. Residues 491-629 (TVPEQHICTY…TLLLYGTADP (139 aa)) form the P/Homo B domain. An intrachain disulfide couples cysteine 498 to cysteine 527. Asparagine 519 is a glycosylation site (N-linked (GlcNAc...) asparagine). FU repeat units lie at residues 674-723 (NCHD…YYLD), 725-777 (DKCK…LVAD), and 804-850 (GKCD…STKS). An N-linked (GlcNAc...) asparagine glycan is attached at asparagine 868. The chain crosses the membrane as a helical span at residues 872–892 (GFGLMFWIVVSLIAACGICAC). The Cytoplasmic segment spans residues 893-942 (KKCASETKSSNVEYAPLAQYNATNGAINLGAHTDDEDDDEDEVFVNPQIV). The tract at residues 922-942 (GAHTDDEDDDEDEVFVNPQIV) is disordered. Residues 926 to 935 (DDEDDDEDEV) are compositionally biased toward acidic residues.

It belongs to the peptidase S8 family. Furin subfamily. Requires Ca(2+) as cofactor. As to expression, in larvae and adults, expressed in all hypodermal cells, vulva and ventral nerve cords. Most highly expressed isoform in the embryonic epidermis. In terms of tissue distribution, expressed primarily in the germline. As to expression, expressed primarily in pharyngeal epithelial cells.

The protein resides in the membrane. Functionally, serine endoprotease which cleaves proproteins at paired basic amino acids at the consensus RX(K/R)R motif. Involved in N-terminal processing of cuticle collagens and plays a role in cuticle biosynthesis. May cleave both sqt-3 and dpy-17 collagens to promote their secretion. Acts in ASEL sensory neurons to regulate high salt chemotaxis responses probably by cleaving insulin-like protein ins-6 into its mature and active form. Essential for embryonic and larval development. Involved in cuticle biosynthesis but dispensable for larval development. The protein is Endoprotease bli-4 (bli-4) of Caenorhabditis elegans.